We begin with the raw amino-acid sequence, 576 residues long: Putative SPbeta prophage-derived single-strand DNA-specific exonuclease YorK (576 aa).

Y473 carries the post-translational modification Phosphotyrosine.

This sequence belongs to the RecJ family.

Putative single-stranded-DNA-specific exonuclease. This chain is Putative SPbeta prophage-derived single-strand DNA-specific exonuclease YorK (yorK), found in Bacillus subtilis (strain 168).